The chain runs to 766 residues: 5-methyltetrahydropteroyltriglutamate--homocysteine methyltransferase (766 aa).

5-methyltetrahydropteroyltri-L-glutamate contacts are provided by residues 16-19 (RELK) and lysine 119. Residues 440–442 (IGS) and glutamate 493 each bind L-homocysteine. Residues 440-442 (IGS) and glutamate 493 contribute to the L-methionine site. 5-methyltetrahydropteroyltri-L-glutamate is bound by residues 524–525 (RC) and tryptophan 570. Aspartate 608 contributes to the L-homocysteine binding site. Aspartate 608 contributes to the L-methionine binding site. Glutamate 614 is a 5-methyltetrahydropteroyltri-L-glutamate binding site. 3 residues coordinate Zn(2+): histidine 650, cysteine 652, and glutamate 674. The active-site Proton donor is the histidine 703. Cysteine 735 is a binding site for Zn(2+).

This sequence belongs to the vitamin-B12 independent methionine synthase family. Zn(2+) serves as cofactor.

The catalysed reaction is 5-methyltetrahydropteroyltri-L-glutamate + L-homocysteine = tetrahydropteroyltri-L-glutamate + L-methionine. Its pathway is amino-acid biosynthesis; L-methionine biosynthesis via de novo pathway; L-methionine from L-homocysteine (MetE route): step 1/1. Functionally, catalyzes the transfer of a methyl group from 5-methyltetrahydrofolate to homocysteine resulting in methionine formation. The protein is 5-methyltetrahydropteroyltriglutamate--homocysteine methyltransferase of Pseudomonas aeruginosa (strain UCBPP-PA14).